Here is a 249-residue protein sequence, read N- to C-terminus: Small ribosomal subunit protein uS3 (249 aa).

One can recognise a KH type-2 domain in the interval 39 to 108 (IRQLINKKLA…TVAVNVAEIP (70 aa)). The segment at 214–249 (ETFARPQRRDRDERRPEGGDRPARRRPTARRRTGGE) is disordered. Residues 220 to 235 (QRRDRDERRPEGGDRP) are compositionally biased toward basic and acidic residues. Over residues 236–249 (ARRRPTARRRTGGE) the composition is skewed to basic residues.

The protein belongs to the universal ribosomal protein uS3 family. In terms of assembly, part of the 30S ribosomal subunit. Forms a tight complex with proteins S10 and S14.

In terms of biological role, binds the lower part of the 30S subunit head. Binds mRNA in the 70S ribosome, positioning it for translation. The chain is Small ribosomal subunit protein uS3 from Deinococcus radiodurans (strain ATCC 13939 / DSM 20539 / JCM 16871 / CCUG 27074 / LMG 4051 / NBRC 15346 / NCIMB 9279 / VKM B-1422 / R1).